Here is a 772-residue protein sequence, read N- to C-terminus: Transducin-like enhancer protein 4 (772 aa).

Disordered regions lie at residues 1–24 (MIRDLSKMYPQTRHPAPPHQPAQP) and 183–359 (LPIK…LTGL). Residues 1–137 (MIRDLSKMYP…AIIGQQLQAQ (137 aa)) are q domain. Residues 138-205 (HLSHAHGLPV…HQRDRDSIKS (68 aa)) are GP domain. Positions 184-203 (PIKDEKKHHDSDHQRDRDSI) are enriched in basic and acidic residues. Over residues 204–213 (KSSSVSPSAS) the composition is skewed to low complexity. Residues 206–275 (SSVSPSASFR…SPRGSPAHSP (70 aa)) are ccN domain. 2 stretches are compositionally biased toward basic and acidic residues: residues 216 to 253 (AAEKHRNSTDYSSESKKQKTEEKDIAARYDSDGEKSDD) and 274 to 290 (SPRENGLDKPRLLKKDA). Residues 276 to 452 (RENGLDKPRL…GGKPAYSFHV (177 aa)) are SP domain. Positions 291–306 (PISPASIASSSSTPSS) are enriched in low complexity. Residues 307–316 (KSKEHSHNEK) are compositionally biased toward basic and acidic residues. Positions 318–329 (TTPVSKSNTPTP) are enriched in polar residues. WD repeat units lie at residues 484 to 522 (NHGEVVCAVTISNPTRHVYTGGKGCVKVWDISHPGNKSP), 530 to 569 (NRDNYIRSCRLLPDGRTLIVGGEASTLSIWDLAAPTPRIK), 574 to 613 (SSAPACYALAISPDSKVCFSCCSDGNIAVWDLHNQTLVRQ), 616 to 655 (GHTDGASCIDISNDGTKLWTGGLDNTVRSWDLREGRQLQQ), 657 to 696 (DFTSQIFSLGYCPTGEWLAVGMENSNVEVLHVTKPDKYQL), 698 to 737 (LHESCVLSLKFAHCGKWFVSTGKDNLLNAWRTPYGASIFQ), and 739 to 772 (KESSSVLSCDISVDDKYIVTGSGDKKATVYEVIY).

This sequence belongs to the WD repeat Groucho/TLE family. As to quaternary structure, interacts with tcf7, tcf7l1, ripply2.2/bowline, dscr6/ripply3 and foxd3. Associates with tbx6 in the presence of ripply2.2/bowline. Interacts with EFNB1 through the SP domain. In terms of processing, ubiquitinated by XIAP/BIRC4. As to expression, expressed at high levels in the spleen and ovary.

It is found in the nucleus. Transcriptional corepressor. Functions with ripply2.2/bowline to down regulate transcription of tbx6-dependent gene expression. Represses transcription of siamois and nodal3. In Xenopus laevis (African clawed frog), this protein is Transducin-like enhancer protein 4 (tle4).